The chain runs to 139 residues: D-ribose pyranase (139 aa).

The active-site Proton donor is H20. Substrate-binding positions include D28, H106, and 128–130 (YAN).

The protein belongs to the RbsD / FucU family. RbsD subfamily. Homodecamer.

The protein localises to the cytoplasm. The catalysed reaction is beta-D-ribopyranose = beta-D-ribofuranose. The protein operates within carbohydrate metabolism; D-ribose degradation; D-ribose 5-phosphate from beta-D-ribopyranose: step 1/2. Functionally, catalyzes the interconversion of beta-pyran and beta-furan forms of D-ribose. This is D-ribose pyranase from Aeromonas salmonicida (strain A449).